Consider the following 213-residue polypeptide: Large ribosomal subunit protein uL23 (213 aa).

The tract at residues 1-117 (MNHNEIIKYP…KSTSELKLEE (117 aa)) is large ribosomal subunit protein uL23. The unknown stretch occupies residues 118-213 (KIAAKIAAKE…TTKKTTTKKV (96 aa)).

Belongs to the universal ribosomal protein uL23 family. As to quaternary structure, part of the 50S ribosomal subunit. Contacts protein L29, and trigger factor when it is bound to the ribosome.

One of the early assembly proteins it binds 23S rRNA. One of the proteins that surrounds the polypeptide exit tunnel on the outside of the ribosome. Forms the main docking site for trigger factor binding to the ribosome. The polypeptide is Large ribosomal subunit protein uL23 (Mycoplasma mobile (strain ATCC 43663 / 163K / NCTC 11711) (Mesomycoplasma mobile)).